Reading from the N-terminus, the 309-residue chain is MIKIYAPASIGNVGVGFDILGAAIIPVNGSLLGDFVTVKLSNKFNLVNKGIFSNKLPKNTEQNIVWKCWLKFCNTIKRNIPVSIILEKNMPIGSGLGSSACSIVATLVAMNEFCDKPLNSKELLLLMGEVEGEISGSIHYDNVAPCYLGGLQLILEDSKIISQTIPNFKNWFWIVAWPGTKVPTAEARDILPKKYKKETCIKNSRYLAGFIHASYSQQPHLAARLMQDFIAEPYRIKLLPNYLYVKEKIKKIGAISSGISGSGPTIFSISDNINTAQKISAWLTENYLQNTTGFVHICFLDSKGVRKIG.

Position 91-101 (91-101) interacts with ATP; it reads PIGSGLGSSAC.

The protein belongs to the GHMP kinase family. Homoserine kinase subfamily.

It is found in the cytoplasm. It catalyses the reaction L-homoserine + ATP = O-phospho-L-homoserine + ADP + H(+). It participates in amino-acid biosynthesis; L-threonine biosynthesis; L-threonine from L-aspartate: step 4/5. Catalyzes the ATP-dependent phosphorylation of L-homoserine to L-homoserine phosphate. In Buchnera aphidicola subsp. Acyrthosiphon pisum (strain APS) (Acyrthosiphon pisum symbiotic bacterium), this protein is Homoserine kinase.